The following is a 331-amino-acid chain: Biotin synthase (331 aa).

The 225-residue stretch at 43 to 267 (NTVQVSTLLS…LMPASYVRLS (225 aa)) folds into the Radical SAM core domain. 3 residues coordinate [4Fe-4S] cluster: Cys-58, Cys-62, and Cys-65. The [2Fe-2S] cluster site is built by Cys-102, Cys-133, Cys-193, and Arg-265.

This sequence belongs to the radical SAM superfamily. Biotin synthase family. Homodimer. [4Fe-4S] cluster serves as cofactor. [2Fe-2S] cluster is required as a cofactor.

It catalyses the reaction (4R,5S)-dethiobiotin + (sulfur carrier)-SH + 2 reduced [2Fe-2S]-[ferredoxin] + 2 S-adenosyl-L-methionine = (sulfur carrier)-H + biotin + 2 5'-deoxyadenosine + 2 L-methionine + 2 oxidized [2Fe-2S]-[ferredoxin]. The protein operates within cofactor biosynthesis; biotin biosynthesis; biotin from 7,8-diaminononanoate: step 2/2. In terms of biological role, catalyzes the conversion of dethiobiotin (DTB) to biotin by the insertion of a sulfur atom into dethiobiotin via a radical-based mechanism. The protein is Biotin synthase of Alkalilimnicola ehrlichii (strain ATCC BAA-1101 / DSM 17681 / MLHE-1).